We begin with the raw amino-acid sequence, 161 residues long: Cyclic pyranopterin monophosphate synthase (161 aa).

Residues 78 to 80 (LCH) and 116 to 117 (ME) contribute to the substrate site. Residue Asp131 is part of the active site.

This sequence belongs to the MoaC family. Homohexamer; trimer of dimers.

It carries out the reaction (8S)-3',8-cyclo-7,8-dihydroguanosine 5'-triphosphate = cyclic pyranopterin phosphate + diphosphate. It functions in the pathway cofactor biosynthesis; molybdopterin biosynthesis. Its function is as follows. Catalyzes the conversion of (8S)-3',8-cyclo-7,8-dihydroguanosine 5'-triphosphate to cyclic pyranopterin monophosphate (cPMP). This chain is Cyclic pyranopterin monophosphate synthase, found in Bordetella parapertussis (strain 12822 / ATCC BAA-587 / NCTC 13253).